Consider the following 271-residue polypeptide: Co-chaperone protein DjlA (271 aa).

Over 1-6 (MQYWGK) the chain is Periplasmic. Residues 7–31 (IIGVAVALLMGGGFWGVVLGLLIGH) traverse the membrane as a helical segment. Residues 32-271 (MFDKARSRKM…ELIKQQKGFK (240 aa)) lie on the Cytoplasmic side of the membrane. The J domain maps to 205 to 271 (DACNVLGVKP…ELIKQQKGFK (67 aa)).

As to quaternary structure, homodimer.

It is found in the cell inner membrane. In terms of biological role, regulatory DnaK co-chaperone. Direct interaction between DnaK and DjlA is needed for the induction of the wcaABCDE operon, involved in the synthesis of a colanic acid polysaccharide capsule, possibly through activation of the RcsB/RcsC phosphotransfer signaling pathway. The colanic acid capsule may help the bacterium survive conditions outside the host. The chain is Co-chaperone protein DjlA from Escherichia coli O157:H7.